We begin with the raw amino-acid sequence, 153 residues long: uncharacterized protein (153 aa).

Residues 19–46 are disordered; sequence EKSTRLEEDAMESEPLAGTKTRGRGRRR.

This is an uncharacterized protein from Homo sapiens (Human).